A 386-amino-acid chain; its full sequence is Sulfate adenylyltransferase (386 aa).

The protein belongs to the sulfate adenylyltransferase family.

The enzyme catalyses sulfate + ATP + H(+) = adenosine 5'-phosphosulfate + diphosphate. It functions in the pathway sulfur metabolism; hydrogen sulfide biosynthesis; sulfite from sulfate: step 1/3. The polypeptide is Sulfate adenylyltransferase (Persephonella marina (strain DSM 14350 / EX-H1)).